The following is a 721-amino-acid chain: Photosystem I P700 chlorophyll a apoprotein A1 (721 aa).

The next 8 membrane-spanning stretches (helical) occupy residues 61–84, 147–170, 186–210, 282–300, 337–360, 376–402, 424–446, and 522–540; these read VFSA…FHGA, LYCT…FHYH, LNHH…HVSL, TAHH…GHMY, WHAQ…HHMY, LSLF…IFMV, AIVS…LYIH, and FLVH…LILL. 2 residues coordinate [4Fe-4S] cluster: cysteine 564 and cysteine 573. 2 helical membrane-spanning segments follow: residues 580-601 and 655-677; these read HVFL…HFSW and LSAY…MFLF. Histidine 666 is a chlorophyll a' binding site. Chlorophyll a-binding residues include methionine 674 and tyrosine 682. A phylloquinone-binding site is contributed by tryptophan 683. Residues 715-721 traverse the membrane as a helical segment; the sequence is AVGVAHY.

Belongs to the PsaA/PsaB family. The PsaA/B heterodimer binds the P700 chlorophyll special pair and subsequent electron acceptors. PSI consists of a core antenna complex that captures photons, and an electron transfer chain that converts photonic excitation into a charge separation. The eukaryotic PSI reaction center is composed of at least 11 subunits. Requires P700 is a chlorophyll a/chlorophyll a' dimer, A0 is one or more chlorophyll a, A1 is one or both phylloquinones and FX is a shared 4Fe-4S iron-sulfur center. as cofactor.

It localises to the plastid. The protein resides in the chloroplast thylakoid membrane. The enzyme catalyses reduced [plastocyanin] + hnu + oxidized [2Fe-2S]-[ferredoxin] = oxidized [plastocyanin] + reduced [2Fe-2S]-[ferredoxin]. Its function is as follows. PsaA and PsaB bind P700, the primary electron donor of photosystem I (PSI), as well as the electron acceptors A0, A1 and FX. PSI is a plastocyanin-ferredoxin oxidoreductase, converting photonic excitation into a charge separation, which transfers an electron from the donor P700 chlorophyll pair to the spectroscopically characterized acceptors A0, A1, FX, FA and FB in turn. Oxidized P700 is reduced on the lumenal side of the thylakoid membrane by plastocyanin. This Ginkgo biloba (Ginkgo) protein is Photosystem I P700 chlorophyll a apoprotein A1.